A 152-amino-acid chain; its full sequence is Proteolipid protein 2 (152 aa).

One can recognise an MARVEL domain in the interval Phe-19 to Gln-137. Transmembrane regions (helical) follow at residues Gly-25–Ser-45, Gly-48–Met-68, and Phe-85–Glu-105. An N-linked (GlcNAc...) asparagine glycan is attached at Asn-108. A helical membrane pass occupies residues Ile-112–Thr-132.

It localises to the membrane. May play a role in cell differentiation in the intestinal epithelium. The protein is Proteolipid protein 2 (PLP2) of Bos taurus (Bovine).